The sequence spans 265 residues: Protein N-terminal and lysine N-methyltransferase EFM7 (265 aa).

S-adenosyl-L-methionine contacts are provided by residues Trp-55, 81–83 (GAA), Asp-103, Trp-141, and Ala-169.

The protein belongs to the class I-like SAM-binding methyltransferase superfamily. EFM7 family.

It is found in the cytoplasm. Its function is as follows. S-adenosyl-L-methionine-dependent protein methyltransferase that trimethylates the N-terminal glycine 'Gly-2' of elongation factor 1-alpha, before also catalyzing the mono- and dimethylation of 'Lys-3'. In Gibberella zeae (strain ATCC MYA-4620 / CBS 123657 / FGSC 9075 / NRRL 31084 / PH-1) (Wheat head blight fungus), this protein is Protein N-terminal and lysine N-methyltransferase EFM7.